A 76-amino-acid polypeptide reads, in one-letter code: Omega/Kappa-hexatoxin-Hv1h (76 aa).

A signal peptide spans 1–22 (MNTATGFIVLLVLATILGGIEA). The propeptide occupies 23-35 (GESHMRKDAMGRV). 3 cysteine pairs are disulfide-bonded: C40/C55, C47/C60, and C54/C74.

Belongs to the neurotoxin 08 (Shiva) family. 02 (omega/kappa toxin) subfamily. As to expression, expressed by the venom gland.

It localises to the secreted. Toxin that may inhibit ion channels. In Hadronyche versuta (Blue mountains funnel-web spider), this protein is Omega/Kappa-hexatoxin-Hv1h.